The following is a 564-amino-acid chain: Rhodopsin kinase GRK1 (564 aa).

The interval 1–15 is interaction with RCVRN; that stretch reads MDFGSLETVVANSAF. Residues 1-189 are N-terminal; the sequence is MDFGSLETVV…LEAQPIGEDW (189 aa). At serine 5 the chain carries Phosphoserine. Phosphothreonine is present on threonine 8. Serine 21 is subject to Phosphoserine; by PKA and autocatalysis. The RGS domain occupies 58-175; the sequence is FDNLCSEQPI…LGSLYFLRFL (118 aa). One can recognise a Protein kinase domain in the interval 190 to 455; it reads FLDFRVLGKG…CDALRANVLF (266 aa). ATP is bound by residues 196 to 204 and lysine 219; that span reads LGKGGFGEV. Aspartate 317 serves as the catalytic Proton acceptor. In terms of domain architecture, AGC-kinase C-terminal spans 456–521; it reads KDISWRQLEA…GNCSIPWQEE (66 aa). The interval 456–564 is C-terminal; sequence KDISWRQLEA…TAKSGMCLIS (109 aa). The residue at position 491 (serine 491) is a Phosphoserine; by autocatalysis. Position 492 is a phosphothreonine; by autocatalysis (threonine 492). At cysteine 561 the chain carries Cysteine methyl ester. Cysteine 561 carries the S-farnesyl cysteine lipid modification. Positions 562 to 564 are cleaved as a propeptide — removed in mature form; sequence LIS.

It belongs to the protein kinase superfamily. AGC Ser/Thr protein kinase family. GPRK subfamily. As to quaternary structure, interacts (via N-terminus) with RCVRN (via C-terminus); the interaction is Ca(2+)-dependent. Interacts (when prenylated) with PDE6D; this promotes release from membranes. May form a complex composed of RHO, GRK1 and RCVRN in a Ca(2+)-dependent manner; RCVRN prevents the interaction between GRK1 and RHO. Autophosphorylated, Ser-21 is a minor site of autophosphorylation compared to Ser-491 and Thr-492. Phosphorylation at Ser-21 is regulated by light and activated by cAMP. Post-translationally, farnesylation is required for full activity. Detected in retina (at protein level). Retina-specific. Expressed in rod and cone photoreceptor cells.

It localises to the membrane. The protein localises to the cell projection. It is found in the cilium. The protein resides in the photoreceptor outer segment. The catalysed reaction is L-threonyl-[rhodopsin] + ATP = O-phospho-L-threonyl-[rhodopsin] + ADP + H(+). It catalyses the reaction L-seryl-[rhodopsin] + ATP = O-phospho-L-seryl-[rhodopsin] + ADP + H(+). Its activity is regulated as follows. Inhibited by RCVRN, which prevents the interaction between GRK1 and RHO. Inhibition is calcium-dependent. Functionally, retina-specific kinase involved in the signal turnoff via phosphorylation of rhodopsin (RHO), the G protein- coupled receptor that initiates the phototransduction cascade. This rapid desensitization is essential for scotopic vision and permits rapid adaptation to changes in illumination. May play a role in the maintenance of the outer nuclear layer in the retina. The sequence is that of Rhodopsin kinase GRK1 from Rattus norvegicus (Rat).